Consider the following 120-residue polypeptide: Ribosome-binding factor A (120 aa).

It belongs to the RbfA family. As to quaternary structure, monomer. Binds 30S ribosomal subunits, but not 50S ribosomal subunits or 70S ribosomes.

It is found in the cytoplasm. One of several proteins that assist in the late maturation steps of the functional core of the 30S ribosomal subunit. Associates with free 30S ribosomal subunits (but not with 30S subunits that are part of 70S ribosomes or polysomes). Required for efficient processing of 16S rRNA. May interact with the 5'-terminal helix region of 16S rRNA. The chain is Ribosome-binding factor A from Fusobacterium nucleatum subsp. nucleatum (strain ATCC 25586 / DSM 15643 / BCRC 10681 / CIP 101130 / JCM 8532 / KCTC 2640 / LMG 13131 / VPI 4355).